Reading from the N-terminus, the 577-residue chain is Arginine--tRNA ligase (577 aa).

Positions 122–132 match the 'HIGH' region motif; the sequence is PNVAKEMHVGH.

Belongs to the class-I aminoacyl-tRNA synthetase family. Monomer.

Its subcellular location is the cytoplasm. The catalysed reaction is tRNA(Arg) + L-arginine + ATP = L-arginyl-tRNA(Arg) + AMP + diphosphate. The sequence is that of Arginine--tRNA ligase from Haemophilus influenzae (strain PittGG).